The sequence spans 837 residues: E3 ubiquitin-protein ligase bre-1 (837 aa).

The tract at residues 1–33 (MMKRSNEGIGGENYASSPSDDGQQKRRKIQFEP) is disordered. Positions 1–313 (MMKRSNEGIG…AKEIENLRLE (313 aa)) are interaction with ubc-1. Coiled coils occupy residues 54-89 (TSKL…ESNF) and 185-253 (HKEL…KHMR). The segment at 269-302 (GQSGGNGGATPSSSGTTNATEKKISAPDIPPSET) is disordered. A compositionally biased stretch (polar residues) spans 277–287 (ATPSSSGTTNA). Coiled coils occupy residues 300–397 (SETA…AFRS), 458–651 (DEMK…KAQT), and 677–763 (VQFK…NESV). The RING-type zinc finger occupies 785–824 (CPSCKTRPKDCIMLKCYHLFCETCIKTMYDTRQRKCPKCN).

It belongs to the BRE1 family. In terms of assembly, interacts with ubc-1. Interacts with mrg-1. In adult animals, expressed in oocytes, germ cells, pharyngeal and intestinal cells.

Its subcellular location is the nucleus. It carries out the reaction S-ubiquitinyl-[E2 ubiquitin-conjugating enzyme]-L-cysteine + [acceptor protein]-L-lysine = [E2 ubiquitin-conjugating enzyme]-L-cysteine + N(6)-ubiquitinyl-[acceptor protein]-L-lysine.. The protein operates within protein modification; protein ubiquitination. Its function is as follows. E3 ubiquitin-protein ligase that mediates monoubiquitination of 'Lys-117' of histone H2B. H2B 'Lys-117' ubiquitination gives a specific tag for epigenetic transcriptional activation and is also prerequisite for histone H3 'Lys-4' and 'Lys-79' methylation. Involved in regulating stem cell proliferative fate. This is E3 ubiquitin-protein ligase bre-1 (rfp-1) from Caenorhabditis elegans.